A 60-amino-acid chain; its full sequence is Large ribosomal subunit protein uL30 (60 aa).

Belongs to the universal ribosomal protein uL30 family. In terms of assembly, part of the 50S ribosomal subunit.

The polypeptide is Large ribosomal subunit protein uL30 (Pediococcus pentosaceus (strain ATCC 25745 / CCUG 21536 / LMG 10740 / 183-1w)).